A 104-amino-acid chain; its full sequence is Large ribosomal subunit protein uL24 (104 aa).

The protein belongs to the universal ribosomal protein uL24 family. Part of the 50S ribosomal subunit.

In terms of biological role, one of two assembly initiator proteins, it binds directly to the 5'-end of the 23S rRNA, where it nucleates assembly of the 50S subunit. Its function is as follows. One of the proteins that surrounds the polypeptide exit tunnel on the outside of the subunit. This chain is Large ribosomal subunit protein uL24, found in Bartonella tribocorum (strain CIP 105476 / IBS 506).